A 74-amino-acid polypeptide reads, in one-letter code: uncharacterized protein (74 aa).

The helical transmembrane segment at 15 to 32 (FLHALTVTFLSDIFVWLV) threads the bilayer.

It localises to the membrane. This is an uncharacterized protein from Saccharomyces cerevisiae (strain ATCC 204508 / S288c) (Baker's yeast).